We begin with the raw amino-acid sequence, 435 residues long: Sulfopropanediol 3-dehydrogenase (435 aa).

Tyr119, Gln181, and Asn204 together coordinate NAD(+). 2 residues coordinate Zn(2+): Gln249 and His252. Catalysis depends on proton acceptor residues Glu319 and His320. Zn(2+) contacts are provided by Asp353 and His412.

Belongs to the histidinol dehydrogenase family. HpsN subfamily. It depends on Zn(2+) as a cofactor.

The catalysed reaction is (2R)-3-sulfopropanediol + 2 NAD(+) + H2O = (2R)-3-sulfolactate + 2 NADH + 3 H(+). Functionally, catalyzes the NAD-dependent oxidation of (R)-2,3-dihydroxypropane-1-sulfonate to (R)-3-sulfolactate. The chain is Sulfopropanediol 3-dehydrogenase from Ruegeria pomeroyi (strain ATCC 700808 / DSM 15171 / DSS-3) (Silicibacter pomeroyi).